We begin with the raw amino-acid sequence, 126 residues long: Glycine cleavage system H protein (126 aa).

The Lipoyl-binding domain maps to Val22 to Glu104. The residue at position 63 (Lys63) is an N6-lipoyllysine.

The protein belongs to the GcvH family. The glycine cleavage system is composed of four proteins: P, T, L and H. (R)-lipoate serves as cofactor.

Functionally, the glycine cleavage system catalyzes the degradation of glycine. The H protein shuttles the methylamine group of glycine from the P protein to the T protein. Is also involved in protein lipoylation via its role as an octanoyl/lipoyl carrier protein intermediate. This chain is Glycine cleavage system H protein, found in Staphylococcus aureus (strain JH1).